Here is a 723-residue protein sequence, read N- to C-terminus: Transcription factor E2F7 (723 aa).

Residues 121 to 146 (AEEEEEEELDDSCQYEALDESERRPS) are disordered. Acidic residues predominate over residues 122–139 (EEEEEEELDDSCQYEALD). DNA-binding regions lie at residues 147 to 216 (RKQK…VWHG) and 264 to 349 (RKDK…KWIG). 2 stretches are compositionally biased toward polar residues: residues 356–370 (SSNSDDLRGQISNSG) and 395–405 (LISSAPSTPHR). 5 disordered regions span residues 356–379 (SSNSDDLRGQISNSGTERREKMAR), 395–417 (LISSAPSTPHRYSTDEPVDYSRK), 489–546 (SLRK…ASFG), 650–689 (EHHGNVPATTSSPRAEESPKPAQTQTPVTPKEASLGSKSF), and 702–723 (QSAARKRGSAQRRLDIGHTAAN). Over residues 494-503 (ERSEEDDHQT) the composition is skewed to basic and acidic residues. A compositionally biased stretch (low complexity) spans 520-535 (SESLSSSTRRSPVCSP).

Belongs to the E2F/DP family. As to quaternary structure, homodimer and heterodimer: mainly forms homodimers and, to a lesser extent, heterodimers with e2f8.

The protein localises to the nucleus. Functionally, atypical E2F transcription factor that participates in various processes such as angiogenesis and polyploidization of specialized cells. Mainly acts as a transcription repressor that binds DNA independently of DP proteins and specifically recognizes the E2 recognition site 5'-TTTC[CG]CGC-3'. Directly represses transcription of classical E2F transcription factors such as e2f1. Acts as a regulator of S-phase by recognizing and binding the E2-related site 5'-TTCCCGCC-3' and mediating repression of G1/S-regulated genes. Acts as a promoter of sprouting angiogenesis, possibly by acting as a transcription activator and promoting expression of vegfa. This Danio rerio (Zebrafish) protein is Transcription factor E2F7 (e2f7).